The chain runs to 415 residues: Serine hydroxymethyltransferase (415 aa).

(6S)-5,6,7,8-tetrahydrofolate is bound by residues leucine 117 and 121–123 (GHL). At lysine 226 the chain carries N6-(pyridoxal phosphate)lysine.

This sequence belongs to the SHMT family. Homodimer. Pyridoxal 5'-phosphate is required as a cofactor.

It is found in the cytoplasm. It carries out the reaction (6R)-5,10-methylene-5,6,7,8-tetrahydrofolate + glycine + H2O = (6S)-5,6,7,8-tetrahydrofolate + L-serine. It participates in one-carbon metabolism; tetrahydrofolate interconversion. Its pathway is amino-acid biosynthesis; glycine biosynthesis; glycine from L-serine: step 1/1. In terms of biological role, catalyzes the reversible interconversion of serine and glycine with tetrahydrofolate (THF) serving as the one-carbon carrier. This reaction serves as the major source of one-carbon groups required for the biosynthesis of purines, thymidylate, methionine, and other important biomolecules. Also exhibits THF-independent aldolase activity toward beta-hydroxyamino acids, producing glycine and aldehydes, via a retro-aldol mechanism. This Dehalococcoides mccartyi (strain CBDB1) protein is Serine hydroxymethyltransferase.